The following is a 360-amino-acid chain: Photosystem II protein D1 (360 aa).

3 consecutive transmembrane segments (helical) span residues 30-47 (YVGW…AAAA), 119-134 (HFLI…QWEL), and 143-157 (WICV…AAFA). Histidine 119 provides a ligand contact to chlorophyll a. Tyrosine 127 is a pheophytin a binding site. Residues aspartate 171 and glutamate 190 each coordinate [CaMn4O5] cluster. A helical transmembrane segment spans residues 198 to 219 (FHMAGVAGMFGGSLFSAMHGSL). Histidine 199 contacts chlorophyll a. Residues histidine 216 and 265-266 (SF) contribute to the a quinone site. Histidine 216 lines the Fe cation pocket. Histidine 273 contributes to the Fe cation binding site. The chain crosses the membrane as a helical span at residues 275-289 (FLAVFPVVCVWLTSM). 4 residues coordinate [CaMn4O5] cluster: histidine 333, glutamate 334, aspartate 343, and alanine 345. Residues 346–360 (AAESTTVALSAPAIG) constitute a propeptide that is removed on maturation.

Belongs to the reaction center PufL/M/PsbA/D family. PSII is composed of 1 copy each of membrane proteins PsbA, PsbB, PsbC, PsbD, PsbE, PsbF, PsbH, PsbI, PsbJ, PsbK, PsbL, PsbM, PsbT, PsbX, PsbY, Psb30/Ycf12, peripheral proteins PsbO, CyanoQ (PsbQ), PsbU, PsbV and a large number of cofactors. It forms dimeric complexes. It depends on The D1/D2 heterodimer binds P680, chlorophylls that are the primary electron donor of PSII, and subsequent electron acceptors. It shares a non-heme iron and each subunit binds pheophytin, quinone, additional chlorophylls, carotenoids and lipids. D1 provides most of the ligands for the Mn4-Ca-O5 cluster of the oxygen-evolving complex (OEC). There is also a Cl(-1) ion associated with D1 and D2, which is required for oxygen evolution. The PSII complex binds additional chlorophylls, carotenoids and specific lipids. as a cofactor. In terms of processing, tyr-162 forms a radical intermediate that is referred to as redox-active TyrZ, YZ or Y-Z. Post-translationally, C-terminally processed by CtpA; processing is essential to allow assembly of the oxygen-evolving complex and thus photosynthetic growth.

The protein localises to the cellular thylakoid membrane. It catalyses the reaction 2 a plastoquinone + 4 hnu + 2 H2O = 2 a plastoquinol + O2. Its function is as follows. Photosystem II (PSII) is a light-driven water:plastoquinone oxidoreductase that uses light energy to abstract electrons from H(2)O, generating O(2) and a proton gradient subsequently used for ATP formation. It consists of a core antenna complex that captures photons, and an electron transfer chain that converts photonic excitation into a charge separation. The D1/D2 (PsbA/PsbD) reaction center heterodimer binds P680, the primary electron donor of PSII as well as several subsequent electron acceptors. The chain is Photosystem II protein D1 from Prochlorococcus marinus (strain MIT 9312).